The primary structure comprises 152 residues: Protein-export protein SecB (152 aa).

Belongs to the SecB family. In terms of assembly, homotetramer, a dimer of dimers. One homotetramer interacts with 1 SecA dimer.

The protein localises to the cytoplasm. Functionally, one of the proteins required for the normal export of preproteins out of the cell cytoplasm. It is a molecular chaperone that binds to a subset of precursor proteins, maintaining them in a translocation-competent state. It also specifically binds to its receptor SecA. The sequence is that of Protein-export protein SecB from Verminephrobacter eiseniae (strain EF01-2).